The primary structure comprises 1244 residues: MMETERLVLPPLDPLNLPLRALEVGCTGRWELLNVPGPPESTLPHGLPPCAPDLCQEAEQLFLSSPAWLPLHGVEHSARKWQRKTDPWSLLAAVETPVPSDLQAQRHPTTGHILGYKEVLLENTNLSATTSLSLRRPPGPASQSLWGNPTQYPFWPGGMDEPSITDLHTREEAEEEIDFEKDLLTVPPGFKKGVDFAPKDHPAPVPGLLSLSRLLEPLDLSGGDEDEGEAAGGPRGDNASPSPSGTPLVRASSLEDLVLKEAATVVSTPEPPKPPPQEQWAVPVDVTSPVGDFYRLIPQPAFQWAFEPDVFQKQAILHLEQHDSVFVAAHTSAGKTVVAEYAIALAQKHMTRTIYTSPIKALSNQKFRDFRNTFGDVGLLTGDVQLHPEASCLIMTTEILRSMLYSGSDVIRDLEWVIFDEVHYINDAERGVVWEEVLIMLPEHVSIILLSATVPNALEFADWIGRLKRRQIYVISTVARPVPLEHYLFTGNSPKTQGELFLLLDSRGAFHTQGYYAAVEAKKERMSKHAQTFGAKQPTHQGGPAQDRGVYLSLLASLRTRAQLPVVVFTFSRGRCDEQASGLTSLDLTTSSEKSEIHLFLQRCLARLRGSDRQLPQVLHMSELLRRGLGVHHSGILPILKEIVEMLFSRGLVKVLFATETFAMGVNMPARTVVFDSMRKHDGSTFRDLLPGEYVQMAGRAGRRGLDPTGTVILLCKGRVPEMADLHRMMMGKPSQLQSQFRLTYTMILNLLRVDALRVEDMMKRSFSEFPSRKDSKAHEQALADLTKRLGALEEPDVTGQLADLPEYYSWAEELTETQNMIQRRIMESVNGLKSLSVGRVVVVKNEEHHNALGVILQVSSNSTSRVFTTLVLCDKPVVSDNPRDKGPATPDVPHPDDLIGFKLFLPEGPCEHTVAKLQPGDVAAISTKVLRVNGEKISEDFSKRQQPKFRKDPPLAAVTTAVQELLRLAQSYPAGPPTLDPINDLQLKDVAVVEGGLRARKLEELIRGAQCVHSPRFPAQYVKLRERMQIQKEMERLRFLLSDQSLLLLPEYHQRVEVLRTLGYVDEAGTVKLAGRVACAMSSHELLLTELMFDNALSALRPEEIAALLSGLVCQSPGDPGDQLPSTLKQGVERVKAVAKRIGEVQVACGLNQTVEEFVGELNFGLVEVVYEWARGMPFSELAGLSGTPEGLVVRCIQRLAEMCRSLRGAARLVGEPVLGAKMETAATLLRRDIVFAASLYTQ.

The tract at residues 218 to 249 is disordered; it reads LDLSGGDEDEGEAAGGPRGDNASPSPSGTPLV. 2 positions are modified to phosphoserine: serine 242 and serine 253. A Helicase ATP-binding domain is found at 316–472; sequence ILHLEQHDSV…WIGRLKRRQI (157 aa). Residue 329 to 336 participates in ATP binding; that stretch reads AHTSAGKT. The short motif at 420-423 is the DEVH box element; sequence DEVH. In terms of domain architecture, Helicase C-terminal spans 582 to 752; it reads GLTSLDLTTS…LTYTMILNLL (171 aa).

It belongs to the helicase family. SKI2 subfamily. Component of the SKI complex which consists of SKIC2, SKIC3 and SKIC8. Interacts with HBS1L isoform 2.

The protein resides in the nucleus. It localises to the cytoplasm. The enzyme catalyses ATP + H2O = ADP + phosphate + H(+). Its function is as follows. Helicase component of the SKI complex, a multiprotein complex that assists the RNA-degrading exosome during the mRNA decay and quality-control pathways. The SKI complex catalyzes mRNA extraction from 80S ribosomal complexes in the 3'-5' direction and channels mRNA to the cytosolic exosome for degradation. SKI-mediated extraction of mRNA from stalled ribosomes allow binding of the Pelota-HBS1L complex and subsequent ribosome disassembly by ABCE1 for ribosome recycling. In the nucleus, the SKI complex associates with transcriptionally active genes in a manner dependent on PAF1 complex (PAF1C). This Mus musculus (Mouse) protein is Superkiller complex protein 2.